A 400-amino-acid chain; its full sequence is Unsaturated glucuronyl hydrolase (400 aa).

The first 20 residues, 1–20 (MRKLVYLVLVLGLTFLNVRC), serve as a signal peptide directing secretion. The active-site Nucleophile is the D120. D181 serves as the catalytic Proton donor.

Belongs to the glycosyl hydrolase 88 family.

The protein localises to the cell surface. In terms of biological role, unsaturated glucuronyl hydrolase involved in ulvan degradation. Ulvan is the main polysaccharide component of the Ulvales (green seaweed) cell wall. It is composed of disaccharide building blocks comprising 3-sulfated rhamnose (Rha3S) linked to D-glucuronic acid (GlcA), L-iduronic acid (IduA), or D-xylose (Xyl). Unsaturated glucuronyl hydrolase catalyzes the cleavage of the unsaturated 4-deoxy-L-threo-hex-4-enopyranosiduronic acid (deltaUA) at the non-reducing end of ulvan oligomers, thus forming 5-dehydro-4-deoxy-D-glucuronate. This Formosa agariphila (strain DSM 15362 / KCTC 12365 / LMG 23005 / KMM 3901 / M-2Alg 35-1) protein is Unsaturated glucuronyl hydrolase.